We begin with the raw amino-acid sequence, 750 residues long: Photosystem I P700 chlorophyll a apoprotein A1 (750 aa).

A run of 8 helical transmembrane segments spans residues 70 to 93, 156 to 179, 195 to 219, 291 to 309, 346 to 369, 385 to 411, 433 to 455, and 531 to 549; these read VFSA…FHGA, LYCT…FHYH, LNHH…HVSL, IAHH…GHMY, WHAQ…HHMY, LSLF…IFMV, AIIS…LYIH, and FLVH…LILL. 2 residues coordinate [4Fe-4S] cluster: Cys-573 and Cys-582. Transmembrane regions (helical) follow at residues 589-610 and 664-686; these read HVFL…HFSW and LSAY…MFLF. His-675 provides a ligand contact to chlorophyll a'. Chlorophyll a-binding residues include Met-683 and Tyr-691. Phylloquinone is bound at residue Trp-692. The chain crosses the membrane as a helical span at residues 724 to 744; the sequence is AVGVTHYLLGGIATTWAFFLA.

It belongs to the PsaA/PsaB family. As to quaternary structure, the PsaA/B heterodimer binds the P700 chlorophyll special pair and subsequent electron acceptors. PSI consists of a core antenna complex that captures photons, and an electron transfer chain that converts photonic excitation into a charge separation. The eukaryotic PSI reaction center is composed of at least 11 subunits. P700 is a chlorophyll a/chlorophyll a' dimer, A0 is one or more chlorophyll a, A1 is one or both phylloquinones and FX is a shared 4Fe-4S iron-sulfur center. is required as a cofactor.

Its subcellular location is the plastid. It is found in the chloroplast thylakoid membrane. It catalyses the reaction reduced [plastocyanin] + hnu + oxidized [2Fe-2S]-[ferredoxin] = oxidized [plastocyanin] + reduced [2Fe-2S]-[ferredoxin]. Its function is as follows. PsaA and PsaB bind P700, the primary electron donor of photosystem I (PSI), as well as the electron acceptors A0, A1 and FX. PSI is a plastocyanin-ferredoxin oxidoreductase, converting photonic excitation into a charge separation, which transfers an electron from the donor P700 chlorophyll pair to the spectroscopically characterized acceptors A0, A1, FX, FA and FB in turn. Oxidized P700 is reduced on the lumenal side of the thylakoid membrane by plastocyanin. This chain is Photosystem I P700 chlorophyll a apoprotein A1, found in Olimarabidopsis pumila (Dwarf rocket).